We begin with the raw amino-acid sequence, 239 residues long: Mannose-binding protein A (239 aa).

An N-terminal signal peptide occupies residues 1-18; it reads MLLLPLLPVLLCVVSVSS. The disordered stretch occupies residues 35 to 88; the sequence is ACGRDGRDGPKGEKGEPGQGLRGLQGPPGKLGPPGSVGSPGSPGPKGQKGDHGD. Residues 37–89 form the Collagen-like domain; it reads GRDGRDGPKGEKGEPGQGLRGLQGPPGKLGPPGSVGSPGSPGPKGQKGDHGDN. Positions 38–50 are enriched in basic and acidic residues; that stretch reads RDGRDGPKGEKGE. P44 bears the 4-hydroxyproline mark. 2 positions are modified to 5-hydroxylysine: K45 and K48. O-linked (Gal...) hydroxylysine glycans are attached at residues K45 and K48. Residues P51, P62, P68, P74, and P79 each carry the 4-hydroxyproline modification. Residues 58–74 are compositionally biased toward low complexity; it reads LQGPPGKLGPPGSVGSP. 2 positions are modified to 5-hydroxylysine: K80 and K83. O-linked (Gal...) hydroxylysine glycosylation is found at K80 and K83. Residues 144-239 enclose the C-type lectin domain; that stretch reads SLCTELQGTV…SFKAVCEFPA (96 aa). 2 disulfide bridges follow: C146–C235 and C213–C227. 8 residues coordinate Ca(2+): D179, E183, E203, N205, E211, D212, N223, and D224. Residues 203–211 are calcium-dependent carbohydrate binding; sequence EPNNHGSGE.

As to quaternary structure, homotrimer. Forms higher oligomeric complexes formed by the association of two, three or more homotrimers. Oligomerization occurs in the endoplasmic reticulum. Interacts with MASP1 and MASP2. In terms of processing, hydroxylated on lysine and proline residues within the collagen-like domain. Post-translationally, O-glycosylated. O-linked glycans on hydroxylysine residues consist of Glc-Gal disaccharides bound to the oxygen atom of post-translationally added hydroxyl groups. Detected in liver and blood serum (at protein level). Detected in liver.

Its subcellular location is the secreted. Its function is as follows. Calcium-dependent lectin. Plays a role in the innate immune response by binding mannose, fucose and N-acetylglucosamine moieties on different microorganisms and mediating activation of the lectin complement pathway. Binds to late apoptotic cells, as well as to apoptotic blebs and to necrotic cells, but not to early apoptotic cells, facilitating their uptake by macrophages. This chain is Mannose-binding protein A (Mbl1), found in Mus musculus (Mouse).